Consider the following 573-residue polypeptide: Estrogen receptor beta (573 aa).

The modulating stretch occupies residues 15–170 (QEVDSSKVGE…CFAGKGDMHF (156 aa)). 2 NR C4-type zinc fingers span residues 171-191 (CAVCHDYASGYHYGVWSCEGC) and 207-231 (CPATNQCTIDKNRRKSCQACRLRKC). A DNA-binding region (nuclear receptor) is located at residues 171–236 (CAVCHDYASG…RLRKCYEVGM (66 aa)). Residues 291 to 527 (TPEQLINRII…DLLLEMLDAN (237 aa)) enclose the NR LBD domain. Low complexity-rich tracts occupy residues 534–552 (MSASYSSQPSPWSQAAQSQ) and 559–573 (CSGECPCPPKESSTI). The interval 534 to 573 (MSASYSSQPSPWSQAAQSQPGPPPSCSGECPCPPKESSTI) is disordered.

Belongs to the nuclear hormone receptor family. NR3 subfamily. As to quaternary structure, binds DNA as a homodimer. Can form a heterodimer with ER-alpha. In terms of tissue distribution, liver.

The protein localises to the nucleus. Its function is as follows. Binds estrogens with an affinity similar to that of ER-alpha, and activates expression of reporter genes containing estrogen response elements (ERE) in an estrogen-dependent manner. This chain is Estrogen receptor beta (esr2), found in Anguilla japonica (Japanese eel).